We begin with the raw amino-acid sequence, 341 residues long: Ribonucleoside-diphosphate reductase subunit beta (341 aa).

Fe cation-binding residues include D89, E120, and H123. Y127 is an active-site residue. Fe cation-binding residues include E185, E219, and H222.

The protein belongs to the ribonucleoside diphosphate reductase small chain family. Tetramer of two alpha and two beta subunits. Fe cation is required as a cofactor.

The catalysed reaction is a 2'-deoxyribonucleoside 5'-diphosphate + [thioredoxin]-disulfide + H2O = a ribonucleoside 5'-diphosphate + [thioredoxin]-dithiol. Functionally, provides the precursors necessary for DNA synthesis. Catalyzes the biosynthesis of deoxyribonucleotides from the corresponding ribonucleotides. This chain is Ribonucleoside-diphosphate reductase subunit beta (nrdB), found in Helicobacter pylori (strain J99 / ATCC 700824) (Campylobacter pylori J99).